The primary structure comprises 65 residues: Protein translocase subunit SecE (65 aa).

The chain crosses the membrane as a helical span at residues 44 to 64; the sequence is LVMAVVGLIAYIVQLTTSLII.

The protein belongs to the SecE/SEC61-gamma family. Component of the Sec protein translocase complex. Heterotrimer consisting of SecY (alpha), SecG (beta) and SecE (gamma) subunits. The heterotrimers can form oligomers, although 1 heterotrimer is thought to be able to translocate proteins. Interacts with the ribosome. May interact with SecDF, and other proteins may be involved.

The protein resides in the cell membrane. Essential subunit of the Sec protein translocation channel SecYEG. Clamps together the 2 halves of SecY. May contact the channel plug during translocation. The protein is Protein translocase subunit SecE of Sulfolobus acidocaldarius (strain ATCC 33909 / DSM 639 / JCM 8929 / NBRC 15157 / NCIMB 11770).